The chain runs to 259 residues: Ferritin-3, chloroplastic (259 aa).

Residues 1–49 (MLLKAASTFSLLNIHGEKKDISPLFSSSSSISSPVSSGKSGNLSFPLRA) constitute a chloroplast transit peptide. Residues 50-88 (SKSSTTTTSTLSGVVFEPFEEVKKEMDLVPSGQQLSLAR) are extension peptide (EP). In terms of domain architecture, Ferritin-like diiron spans 89–242 (HLYSPECEAA…EYVSQLRRLG (154 aa)). Residues Glu-106, Glu-141, His-144, Glu-190, and Gln-224 each coordinate Fe cation.

The protein belongs to the ferritin family. As to quaternary structure, oligomer of 24 subunits. There are two types of subunits: L (light) chain and H (heavy) chain. The major chain can be light or heavy, depending on the species and tissue type. The functional molecule forms a roughly spherical shell with a diameter of 12 nm and contains a central cavity into which the insoluble mineral iron core is deposited.

The protein localises to the plastid. It localises to the chloroplast. The enzyme catalyses 4 Fe(2+) + O2 + 4 H(+) = 4 Fe(3+) + 2 H2O. In terms of biological role, stores iron in a soluble, non-toxic, readily available form. Important for iron homeostasis. Has ferroxidase activity. Iron is taken up in the ferrous form and deposited as ferric hydroxides after oxidation. In Arabidopsis thaliana (Mouse-ear cress), this protein is Ferritin-3, chloroplastic (FER3).